The following is a 97-amino-acid chain: Aspartyl/glutamyl-tRNA(Asn/Gln) amidotransferase subunit C (97 aa).

Low complexity predominate over residues 74-84 (TPEEATAAAPA). The interval 74-97 (TPEEATAAAPAREGTAFKVPRIIE) is disordered.

This sequence belongs to the GatC family. As to quaternary structure, heterotrimer of A, B and C subunits.

It carries out the reaction L-glutamyl-tRNA(Gln) + L-glutamine + ATP + H2O = L-glutaminyl-tRNA(Gln) + L-glutamate + ADP + phosphate + H(+). It catalyses the reaction L-aspartyl-tRNA(Asn) + L-glutamine + ATP + H2O = L-asparaginyl-tRNA(Asn) + L-glutamate + ADP + phosphate + 2 H(+). In terms of biological role, allows the formation of correctly charged Asn-tRNA(Asn) or Gln-tRNA(Gln) through the transamidation of misacylated Asp-tRNA(Asn) or Glu-tRNA(Gln) in organisms which lack either or both of asparaginyl-tRNA or glutaminyl-tRNA synthetases. The reaction takes place in the presence of glutamine and ATP through an activated phospho-Asp-tRNA(Asn) or phospho-Glu-tRNA(Gln). The polypeptide is Aspartyl/glutamyl-tRNA(Asn/Gln) amidotransferase subunit C (Anaeromyxobacter dehalogenans (strain 2CP-1 / ATCC BAA-258)).